Here is a 185-residue protein sequence, read N- to C-terminus: Elongation factor P 1 (185 aa).

Belongs to the elongation factor P family.

The protein resides in the cytoplasm. It functions in the pathway protein biosynthesis; polypeptide chain elongation. Its function is as follows. Involved in peptide bond synthesis. Stimulates efficient translation and peptide-bond synthesis on native or reconstituted 70S ribosomes in vitro. Probably functions indirectly by altering the affinity of the ribosome for aminoacyl-tRNA, thus increasing their reactivity as acceptors for peptidyl transferase. This is Elongation factor P 1 (efp1) from Chlamydia caviae (strain ATCC VR-813 / DSM 19441 / 03DC25 / GPIC) (Chlamydophila caviae).